Here is a 273-residue protein sequence, read N- to C-terminus: Putative ABC transporter ATP-binding protein DVU_1056 (273 aa).

The ABC transporter domain occupies leucine 10–glutamate 242. Residue glycine 44–threonine 51 participates in ATP binding. The interval histidine 234–glutamate 273 is disordered. Residues histidine 235–histidine 267 are compositionally biased toward basic and acidic residues.

The protein belongs to the ABC transporter superfamily.

It is found in the cell inner membrane. Functionally, probably part of an ABC transporter complex. Responsible for energy coupling to the transport system. This chain is Putative ABC transporter ATP-binding protein DVU_1056, found in Nitratidesulfovibrio vulgaris (strain ATCC 29579 / DSM 644 / CCUG 34227 / NCIMB 8303 / VKM B-1760 / Hildenborough) (Desulfovibrio vulgaris).